An 811-amino-acid chain; its full sequence is Methionine--tRNA ligase (811 aa).

Residues proline 11–asparagine 21 carry the 'HIGH' region motif. The Zn(2+) site is built by cysteine 142, cysteine 145, cysteine 155, and cysteine 158. Residues lysine 344–serine 348 carry the 'KMSKS' region motif. Position 347 (lysine 347) interacts with ATP. The disordered stretch occupies residues glycine 606–aspartate 640. The span at asparagine 620 to methionine 635 shows a compositional bias: basic and acidic residues. The 106-residue stretch at phenylalanine 648–threonine 753 folds into the tRNA-binding domain.

It belongs to the class-I aminoacyl-tRNA synthetase family. MetG type 1 subfamily. Homodimer. It depends on Zn(2+) as a cofactor.

The protein localises to the cytoplasm. It carries out the reaction tRNA(Met) + L-methionine + ATP = L-methionyl-tRNA(Met) + AMP + diphosphate. In terms of biological role, is required not only for elongation of protein synthesis but also for the initiation of all mRNA translation through initiator tRNA(fMet) aminoacylation. The sequence is that of Methionine--tRNA ligase from Treponema pallidum (strain Nichols).